Reading from the N-terminus, the 801-residue chain is Probable inorganic carbon transporter subunit DabA (801 aa).

Cysteine 298, aspartate 300, histidine 481, and cysteine 496 together coordinate Zn(2+). Residues 575–596 are disordered; sequence RENAAAERAESMGSDASSGVSE.

It belongs to the inorganic carbon transporter (TC 9.A.2) DabA family. As to quaternary structure, forms a complex with DabB. Requires Zn(2+) as cofactor.

Its subcellular location is the cell membrane. Its function is as follows. Part of an energy-coupled inorganic carbon pump. This chain is Probable inorganic carbon transporter subunit DabA, found in Haloarcula marismortui (strain ATCC 43049 / DSM 3752 / JCM 8966 / VKM B-1809) (Halobacterium marismortui).